We begin with the raw amino-acid sequence, 159 residues long: ATP synthase subunit b 2 (159 aa).

Residues 1–21 (MDATFWALVALIIFVGILLYM) traverse the membrane as a helical segment.

Belongs to the ATPase B chain family. F-type ATPases have 2 components, F(1) - the catalytic core - and F(0) - the membrane proton channel. F(1) has five subunits: alpha(3), beta(3), gamma(1), delta(1), epsilon(1). F(0) has three main subunits: a(1), b(2) and c(10-14). The alpha and beta chains form an alternating ring which encloses part of the gamma chain. F(1) is attached to F(0) by a central stalk formed by the gamma and epsilon chains, while a peripheral stalk is formed by the delta and b chains.

The protein localises to the cell inner membrane. In terms of biological role, f(1)F(0) ATP synthase produces ATP from ADP in the presence of a proton or sodium gradient. F-type ATPases consist of two structural domains, F(1) containing the extramembraneous catalytic core and F(0) containing the membrane proton channel, linked together by a central stalk and a peripheral stalk. During catalysis, ATP synthesis in the catalytic domain of F(1) is coupled via a rotary mechanism of the central stalk subunits to proton translocation. Functionally, component of the F(0) channel, it forms part of the peripheral stalk, linking F(1) to F(0). The chain is ATP synthase subunit b 2 from Chelativorans sp. (strain BNC1).